The following is a 156-amino-acid chain: uncharacterized protein (156 aa).

3 helical membrane-spanning segments follow: residues 42–59 (LLMM…MTTV), 79–98 (ASFL…LLLY), and 105–127 (SLGR…VLGI).

It localises to the cell membrane. This is an uncharacterized protein from Archaeoglobus fulgidus (strain ATCC 49558 / DSM 4304 / JCM 9628 / NBRC 100126 / VC-16).